A 423-amino-acid polypeptide reads, in one-letter code: MSASAVFILDVKGKPLISRNYKGDVAMSEIDHFMPLLMQREEEGALTPLLSHGRVHFLWIKYSNLYLVATTLKNANASLVYSFLYKIVEVFSEYFKELEEESIRDNFVIVYELLDELMDFGFPQTTDSKILQEYITQQGNKLETGKSRVPPTVTNAVSWRSEGIKYKKNEVFIDVIESVNLLVNANGSVLLSEIVGSIKLKVFLSGMPELRLGLNDRVLFELTGRSKNKSVELEDVKFHQCVRLSRFDNDRTISFIPPDGDFELMSYRLSTQVKPLIWIESVIEKFSHSRVEIMVKAKGQFKKQSVANGVEISVPVPSDADSPRFKTSVGSAKYVPEKNTVIWSIKSFPGGKEYLMRAHFGLPSVEKEEVEGRPPIGVKFEIPYFTVSGIQVRYMKIIEKSGYQALPWVRYITQSGDYQLRTS.

The MHD domain occupies 168 to 421 (KNEVFIDVIE…ITQSGDYQLR (254 aa)).

This sequence belongs to the adaptor complexes medium subunit family. In terms of assembly, adaptor protein complex 1 (AP-1) is a heterotetramer composed of two large adaptins (gamma-type subunit AP1G1 and beta-type subunit AP1B1), a medium adaptin (mu-type subunit AP1M1 or AP1M2) and a small adaptin (sigma-type subunit AP1S1 or AP1S2 or AP1S3). Interacts with P2X4. In terms of processing, phosphorylation of membrane-bound AP1M1/AP1M2 increases its affinity for sorting signals.

It localises to the cytoplasmic vesicle. The protein localises to the clathrin-coated vesicle membrane. The protein resides in the golgi apparatus. Functionally, subunit of clathrin-associated adaptor protein complex 1 that plays a role in protein sorting in the trans-Golgi network (TGN) and endosomes. The AP complexes mediate the recruitment of clathrin to membranes and the recognition of sorting signals within the cytosolic tails of transmembrane cargo molecules. The protein is AP-1 complex subunit mu-2 of Bos taurus (Bovine).